A 367-amino-acid polypeptide reads, in one-letter code: NADH-quinone oxidoreductase subunit D (367 aa).

The protein belongs to the complex I 49 kDa subunit family. As to quaternary structure, NDH-1 is composed of 14 different subunits. Subunits NuoB, C, D, E, F, and G constitute the peripheral sector of the complex.

The protein resides in the cell membrane. The catalysed reaction is a quinone + NADH + 5 H(+)(in) = a quinol + NAD(+) + 4 H(+)(out). NDH-1 shuttles electrons from NADH, via FMN and iron-sulfur (Fe-S) centers, to quinones in the respiratory chain. The immediate electron acceptor for the enzyme in this species is believed to be ubiquinone. Couples the redox reaction to proton translocation (for every two electrons transferred, four hydrogen ions are translocated across the cytoplasmic membrane), and thus conserves the redox energy in a proton gradient. This is NADH-quinone oxidoreductase subunit D from Dehalococcoides mccartyi (strain ATCC BAA-2266 / KCTC 15142 / 195) (Dehalococcoides ethenogenes (strain 195)).